Reading from the N-terminus, the 468-residue chain is ATP synthase subunit beta (468 aa).

ATP is bound at residue 155-162 (GGAGVGKT).

The protein belongs to the ATPase alpha/beta chains family. As to quaternary structure, F-type ATPases have 2 components, CF(1) - the catalytic core - and CF(0) - the membrane proton channel. CF(1) has five subunits: alpha(3), beta(3), gamma(1), delta(1), epsilon(1). CF(0) has three main subunits: a(1), b(2) and c(9-12). The alpha and beta chains form an alternating ring which encloses part of the gamma chain. CF(1) is attached to CF(0) by a central stalk formed by the gamma and epsilon chains, while a peripheral stalk is formed by the delta and b chains.

It is found in the cell membrane. The enzyme catalyses ATP + H2O + 4 H(+)(in) = ADP + phosphate + 5 H(+)(out). In terms of biological role, produces ATP from ADP in the presence of a proton gradient across the membrane. The catalytic sites are hosted primarily by the beta subunits. In Bacillus cereus (strain G9842), this protein is ATP synthase subunit beta.